A 283-amino-acid polypeptide reads, in one-letter code: Type III pantothenate kinase (283 aa).

Residue 9–16 (DIGNTRLK) coordinates ATP. Substrate is bound by residues Tyr116 and 123–126 (GVDR). Asp125 acts as the Proton acceptor in catalysis. Position 149 (Thr149) interacts with ATP. Residue Thr211 coordinates substrate.

This sequence belongs to the type III pantothenate kinase family. As to quaternary structure, homodimer. NH4(+) is required as a cofactor. Requires K(+) as cofactor.

Its subcellular location is the cytoplasm. It carries out the reaction (R)-pantothenate + ATP = (R)-4'-phosphopantothenate + ADP + H(+). It participates in cofactor biosynthesis; coenzyme A biosynthesis; CoA from (R)-pantothenate: step 1/5. Catalyzes the phosphorylation of pantothenate (Pan), the first step in CoA biosynthesis. The protein is Type III pantothenate kinase of Cupriavidus taiwanensis (strain DSM 17343 / BCRC 17206 / CCUG 44338 / CIP 107171 / LMG 19424 / R1) (Ralstonia taiwanensis (strain LMG 19424)).